Consider the following 511-residue polypeptide: Cobyric acid synthase (511 aa).

Residues 251 to 443 (LLDIAIICLP…IHGIFDNDVF (193 aa)) form the GATase cobBQ-type domain. Cys-332 (nucleophile) is an active-site residue. The active site involves His-435.

This sequence belongs to the CobB/CobQ family. CobQ subfamily.

It functions in the pathway cofactor biosynthesis; adenosylcobalamin biosynthesis. Functionally, catalyzes amidations at positions B, D, E, and G on adenosylcobyrinic A,C-diamide. NH(2) groups are provided by glutamine, and one molecule of ATP is hydrogenolyzed for each amidation. The sequence is that of Cobyric acid synthase from Listeria monocytogenes serotype 4b (strain CLIP80459).